Consider the following 388-residue polypeptide: Spermidine/putrescine import ATP-binding protein PotA (388 aa).

Positions 17 to 247 (IEIDHVTKRF…PATVFVANFI (231 aa)) constitute an ABC transporter domain. Residue 49–56 (GPSGCGKT) coordinates ATP.

Belongs to the ABC transporter superfamily. Spermidine/putrescine importer (TC 3.A.1.11.1) family. The complex is composed of two ATP-binding proteins (PotA), two transmembrane proteins (PotB and PotC) and a solute-binding protein (PotD).

The protein localises to the cell membrane. It catalyses the reaction ATP + H2O + polyamine-[polyamine-binding protein]Side 1 = ADP + phosphate + polyamineSide 2 + [polyamine-binding protein]Side 1.. Part of the ABC transporter complex PotABCD involved in spermidine/putrescine import. Responsible for energy coupling to the transport system. The protein is Spermidine/putrescine import ATP-binding protein PotA of Mycobacterium sp. (strain KMS).